The following is a 458-amino-acid chain: UPF0210 protein MmarC5_0151 (458 aa).

This sequence belongs to the UPF0210 family.

This Methanococcus maripaludis (strain C5 / ATCC BAA-1333) protein is UPF0210 protein MmarC5_0151.